The chain runs to 124 residues: Fluoride-specific ion channel FluC (124 aa).

4 helical membrane-spanning segments follow: residues 4 to 24 (IFYI…TTLV), 35 to 55 (YATF…FGYL), 63 to 83 (PYLK…FSAF), and 96 to 116 (ILIA…ATWT). Gly-75 and Thr-78 together coordinate Na(+).

Belongs to the fluoride channel Fluc/FEX (TC 1.A.43) family.

The protein localises to the cell inner membrane. It carries out the reaction fluoride(in) = fluoride(out). With respect to regulation, na(+) is not transported, but it plays an essential structural role and its presence is essential for fluoride channel function. In terms of biological role, fluoride-specific ion channel. Important for reducing fluoride concentration in the cell, thus reducing its toxicity. In Flavobacterium psychrophilum (strain ATCC 49511 / DSM 21280 / CIP 103535 / JIP02/86), this protein is Fluoride-specific ion channel FluC.